A 587-amino-acid polypeptide reads, in one-letter code: Glutamine--tRNA ligase (587 aa).

The short motif at P58–H68 is the 'HIGH' region element. ATP-binding positions include E59–N61 and H65–S71. Residues D91 and Y240 each coordinate L-glutamine. ATP contacts are provided by residues T259 and R294 to L295. The short motif at V301–R305 is the 'KMSKS' region element.

It belongs to the class-I aminoacyl-tRNA synthetase family. As to quaternary structure, monomer.

It is found in the cytoplasm. It catalyses the reaction tRNA(Gln) + L-glutamine + ATP = L-glutaminyl-tRNA(Gln) + AMP + diphosphate. This Bordetella parapertussis (strain 12822 / ATCC BAA-587 / NCTC 13253) protein is Glutamine--tRNA ligase.